Reading from the N-terminus, the 636-residue chain is Leucine-rich repeat and fibronectin type-III domain-containing protein 4 (636 aa).

Residues 1-16 (MAPPLLLLLLASGAAA) form the signal peptide. The LRRNT domain maps to 17–48 (CPLPCVCQNLSESLSTLCAHRGLLFVPPNVDR). At 17–518 (CPLPCVCQNL…LQAHVLGGTL (502 aa)) the chain is on the extracellular side. A glycan (N-linked (GlcNAc...) asparagine) is linked at asparagine 25. LRR repeat units lie at residues 49-70 (RTVELRLADNFIQALGPPDFRN), 73-94 (GLVDLTLSRNAITRIGARSFGD), 97-118 (SLRSLHLDGNRLVELGSSSLRG), 121-142 (NLQHLILSGNQLGRIAPGAFDD), 146-169 (SLEDLDVSYNNLRQVPWAGIGSMP), 170-191 (ALHTLNLDHNLIDALPPGVFAQ), and 194-215 (QLSRLDLTSNRLATLAPDPLFS). The LRRCT domain maps to 234 to 280 (NPLHCNCELLWLRRLARPDDLETCASPPTLAGRYFWAVPEGEFSCEP). In terms of domain architecture, Ig-like spans 281-367 (PLIARHTQRL…GEATARVELR (87 aa)). Cysteine 302 and cysteine 351 form a disulfide bridge. Asparagine 333 is a glycosylation site (N-linked (GlcNAc...) asparagine). In terms of domain architecture, Fibronectin type-III spans 405 to 502 (SEPAVQVTEV…GCAHFSTLPA (98 aa)). A helical membrane pass occupies residues 519-539 (TVAVGGVLVAALLVFTVALLV). Over 540-636 (RGRGAGNGRL…SAERLEESVV (97 aa)) the chain is Cytoplasmic. The interval 556–585 (VQSQTNGGTSPMPKSHPPRSPPPRPQRSCS) is disordered. Residues 569–580 (KSHPPRSPPPRP) are compositionally biased toward pro residues. Serine 585 and serine 627 each carry phosphoserine. Positions 633–636 (ESVV) match the PDZ-binding motif.

The protein belongs to the LRFN family. Forms heteromeric complexes with LRFN1 and LRFN2. Can form heteromeric complexes with LRFN3 and LRFN5. Unable to form homophilic interactions across cell junctions. Interacts with DLG1, DLG2, DLG3 and DLG4. Glycosylated.

The protein resides in the membrane. Promotes neurite outgrowth in hippocampal neurons. May play a role in redistributing DLG4 to the cell periphery. This chain is Leucine-rich repeat and fibronectin type-III domain-containing protein 4 (Lrfn4), found in Rattus norvegicus (Rat).